A 244-amino-acid polypeptide reads, in one-letter code: 7-cyano-7-deazaguanine synthase (244 aa).

ATP is bound at residue 19–29 (FSGGQDSTTCL). Residues cysteine 207, cysteine 222, cysteine 225, and cysteine 228 each contribute to the Zn(2+) site.

This sequence belongs to the QueC family. Zn(2+) is required as a cofactor.

It carries out the reaction 7-carboxy-7-deazaguanine + NH4(+) + ATP = 7-cyano-7-deazaguanine + ADP + phosphate + H2O + H(+). It participates in purine metabolism; 7-cyano-7-deazaguanine biosynthesis. Functionally, catalyzes the ATP-dependent conversion of 7-carboxy-7-deazaguanine (CDG) to 7-cyano-7-deazaguanine (preQ(0)). The chain is 7-cyano-7-deazaguanine synthase from Bordetella avium (strain 197N).